Reading from the N-terminus, the 1514-residue chain is ABC transporter C family member 5 (1514 aa).

A run of 10 helical transmembrane segments spans residues 16 to 36 (LLELCSVIINLLLFLVFLFAV), 76 to 96 (FGFNLSLLCCLYVLGVQVLVL), 111 to 131 (FVLCFPASQSLAWFVLSFLVL), 142 to 162 (PFLVRIWWFLAFSICLCTMYV), 177 to 197 (SHVVANLAVTPALGFLCFLAW), 312 to 332 (VFAGLNTLVSYVGPYLISYFV), 334 to 354 (YLGGKEIFPHEGYVLAGIFFT), 421 to 441 (WYLHDIWMLPMQIVLALAILY), 446 to 466 (IAAVATLVATIISILVTIPLA), and 533 to 553 (FIFWSSPIFVAAVTFATSIFL). In terms of domain architecture, ABC transmembrane type-1 1 spans 307–588 (AACNAVFAGL…FPDLVSMMAQ (282 aa)). The ABC transporter 1 domain occupies 622-845 (IEIKDGVFCW…GTDFKALVSA (224 aa)). 657–664 (GTVGSGKS) serves as a coordination point for ATP. A coiled-coil region spans residues 899–927 (ASDLKAIKEKKKKAKRSRKKQLVQEEERV). 6 helical membrane passes run 946–966 (GALIPLIILAQAAFQFLQIAS), 986–1006 (PTLLLIVYTALAFGSSVFIFV), 1078–1098 (IVAVMTNVTWQVFLLVVPVAV), 1117–1137 (IVSIQKSPIIHLFGESIAGAA), 1155–1175 (LLDCFVRPFFCSIAAIEWLCL), and 1180–1200 (LSTLVFAFCMVLLVSFPHGTI). In terms of domain architecture, ABC transmembrane type-1 2 spans 949-1231 (IPLIILAQAA…WILSFCKLEN (283 aa)). Positions 1268–1502 (IELVDVKVRY…KSSMFLKLVT (235 aa)) constitute an ABC transporter 2 domain. Residue 1302–1309 (GRTGSGKS) coordinates ATP.

The protein belongs to the ABC transporter superfamily. ABCC family. Conjugate transporter (TC 3.A.1.208) subfamily. Ubiquitous, mostly in vascular tissues and epidermis, including guard cells.

It localises to the membrane. The catalysed reaction is ATP + H2O + xenobioticSide 1 = ADP + phosphate + xenobioticSide 2.. Its activity is regulated as follows. (E(2)17G) transport activity in negatively regulated by organic anions such as oestradiol-3-sulfate, luteolin-7-O-diglucuronide-4'-O-glucuronide, glycocholate, vanadate and the sulfonylurea glibenclamide, and, to a lower extent, by bafilomycin A1, NH(4)Cl, GSH, GSSG and DNB-GS. Pump for glutathione S-conjugates. Involved in regulation of K(+) and Na(+) cell content. Mediates resistance to NaCl and Li(+), confers sensitivity to sulfonylurea drugs such as glibenclamide (inducer of stomatal opening), and required for stomatal opening regulation by auxin, abscisic acid (ABA) and external Ca(2+). Transports oestradiol-17-(beta-D-glucuronide) (E(2)17G). Involved in the root auxin content regulation that controls the transition from primary root elongation to lateral root formation. Plays a role in ABA-mediated germination inhibition. High-affinity inositol hexakisphosphate transporter that plays a role in guard cell signaling and phytic acid storage. Required for phytic acid accumulation in developing seeds. Phytic acid is the primary storage form of phosphorus in cereal grains and other plant seeds. This is ABC transporter C family member 5 (ABCC5) from Arabidopsis thaliana (Mouse-ear cress).